We begin with the raw amino-acid sequence, 145 residues long: MFNLLKPKGASKRRKIVGRGPGSGLGKTSGRGQKGQKARNTSPRLGFEGGQTPLYRRLPRKGFSNSDYKLEYAIVNLGDIDKKFKDGQVVNYDTLLENKLIKKKNKKIKILSNGKLTKKVSFEVSKISKSAESLVIKIGCTIQLV.

Positions 1–52 are disordered; sequence MFNLLKPKGASKRRKIVGRGPGSGLGKTSGRGQKGQKARNTSPRLGFEGGQT. The span at 19–33 shows a compositional bias: gly residues; it reads RGPGSGLGKTSGRGQ.

It belongs to the universal ribosomal protein uL15 family. As to quaternary structure, part of the 50S ribosomal subunit.

Functionally, binds to the 23S rRNA. The protein is Large ribosomal subunit protein uL15 of Borreliella burgdorferi (strain ATCC 35210 / DSM 4680 / CIP 102532 / B31) (Borrelia burgdorferi).